The chain runs to 959 residues: Translation initiation factor IF-2 (959 aa).

Residues 1-10 (MSDKTNDDKT) show a composition bias toward basic and acidic residues. The segment at 1–374 (MSDKTNDDKT…SQMQETREKI (374 aa)) is disordered. Positions 27–37 (EQSTVRQNFSH) are enriched in polar residues. 2 stretches are compositionally biased toward low complexity: residues 63-118 (AAAA…VTKP) and 128-138 (QRPGGQQAQRP). 2 stretches are compositionally biased toward basic and acidic residues: residues 154-225 (SEMD…EAAK) and 232-241 (ARSERRDDAR). The span at 246 to 284 (GARPQQAGRPQGGRPQPAGRPQQGSPRPAPIIADAAPIA) shows a compositional bias: low complexity. The segment covering 318–333 (PEVRAPKVVKGEDDRR) has biased composition (basic and acidic residues). The 170-residue stretch at 457-626 (SRPPVVTIMG…LLQAEMLDLK (170 aa)) folds into the tr-type G domain. Residues 466-473 (GHVDHGKT) are G1. 466–473 (GHVDHGKT) provides a ligand contact to GTP. Residues 491-495 (GITQH) form a G2 region. Residues 512–515 (DTPG) form a G3 region. Residues 512 to 516 (DTPGH) and 566 to 569 (NKID) contribute to the GTP site. Positions 566 to 569 (NKID) are G4. Residues 602 to 604 (SAK) form a G5 region.

It belongs to the TRAFAC class translation factor GTPase superfamily. Classic translation factor GTPase family. IF-2 subfamily.

It is found in the cytoplasm. In terms of biological role, one of the essential components for the initiation of protein synthesis. Protects formylmethionyl-tRNA from spontaneous hydrolysis and promotes its binding to the 30S ribosomal subunits. Also involved in the hydrolysis of GTP during the formation of the 70S ribosomal complex. This is Translation initiation factor IF-2 from Brucella canis (strain ATCC 23365 / NCTC 10854 / RM-666).